The sequence spans 381 residues: Translation initiation factor eIF2B subunit beta (381 aa).

The disordered stretch occupies residues 125–148 (LQKPEQPHQNRKNSSGSSSMKTKT). Positions 136–145 (KNSSGSSSMK) are enriched in polar residues.

Belongs to the eIF-2B alpha/beta/delta subunits family. Component of the translation initiation factor 2B (eIF2B) complex which is a heterodecamer of two sets of five different subunits: alpha, beta, gamma, delta and epsilon. Subunits alpha, beta and delta comprise a regulatory subcomplex and subunits epsilon and gamma comprise a catalytic subcomplex. Within the complex, the hexameric regulatory complex resides at the center, with the two heterodimeric catalytic subcomplexes bound on opposite sides.

It is found in the cytoplasm. The protein resides in the cytosol. Functionally, acts as a component of the translation initiation factor 2B (eIF2B) complex, which catalyzes the exchange of GDP for GTP on the eukaryotic initiation factor 2 (eIF2) complex gamma subunit. Its guanine nucleotide exchange factor activity is repressed when bound to eIF2 complex phosphorylated on the alpha subunit, thereby limiting the amount of methionyl-initiator methionine tRNA available to the ribosome and consequently global translation is repressed. It activates the synthesis of GCN4 in yeast under amino acid starvation conditions by suppressing the inhibitory effects of multiple AUG codons present in the leader of GCN4 mRNA. It may promote either repression or activation of GCN4 expression depending on amino acid availability. GCD6 and GCD7 repress GCN4 expression at the translational level by ensuring that ribosomes which have translated UORF1 will reinitiate at UORF2, -3, or -4 and thus fail to reach the GCN4 start site. This Saccharomyces cerevisiae (strain ATCC 204508 / S288c) (Baker's yeast) protein is Translation initiation factor eIF2B subunit beta (GCD7).